Reading from the N-terminus, the 464-residue chain is Mitogen-activated protein kinase 10 (464 aa).

A Protein kinase domain is found at 64–359 (YQNLKPIGSG…VDDALQHPYI (296 aa)). Residues 70–78 (IGSGAQGIV) and Lys-93 each bind ATP. Asp-189 acts as the Proton acceptor in catalysis. Thr-221 carries the phosphothreonine; by MAP2K7 modification. Residues 221–223 (TPY) carry the TXY motif. Tyr-223 bears the Phosphotyrosine; by MAP2K4 mark. Residues 405-464 (TKNGVVKGQPSPSGAAVNSSESLPPSSSVNDISSMSTDQTLASDTDSSLEASAGPLGCCR) form a disordered region. The segment covering 423 to 432 (SSESLPPSSS) has biased composition (low complexity). Over residues 433–454 (VNDISSMSTDQTLASDTDSSLE) the composition is skewed to polar residues. S-palmitoyl cysteine attachment occurs at residues Cys-462 and Cys-463.

Belongs to the protein kinase superfamily. CMGC Ser/Thr protein kinase family. MAP kinase subfamily. As to quaternary structure, interacts with MAPK8IP1/JIP-1 and MAPK8IP3/JIP-3/JSAP1. Interacts with SPAG9/MAPK8IP4/JIP4. Interacts with HDAC9 and MAPKBP1. Interacts with ARRB2; the interaction enhances MAPK10 activation by MAP3K5. Interacts with SARM1. Interacts with JUND; interaction is inhibited in the presence of MEN1. The cofactor is Mg(2+). Dually phosphorylated on Thr-221 and Tyr-223 by MAP2K4 and MAP2K7, which activates the enzyme. MAP2K7 shows a strong preference for Thr-221 while MAP2K4 phosphorylates Tyr-223 preferentially. Weakly autophosphorylated on threonine and tyrosine residues in vitro. Post-translationally, palmitoylation regulates subcellular location and axonal development.

It localises to the cytoplasm. The protein localises to the membrane. The protein resides in the nucleus. Its subcellular location is the mitochondrion. The enzyme catalyses L-seryl-[protein] + ATP = O-phospho-L-seryl-[protein] + ADP + H(+). The catalysed reaction is L-threonyl-[protein] + ATP = O-phospho-L-threonyl-[protein] + ADP + H(+). With respect to regulation, activated by threonine and tyrosine phosphorylation by two dual specificity kinases, MAP2K4 and MAP2K7. MAP2K7 phosphorylates MAPK10 on Thr-221 causing a conformational change and a large increase in Vmax for the enzyme. MAP2K4 then phosphorylates Tyr-223 resulting in a further increase in Vmax. Inhibited by dual specificity phosphatases, such as DUSP1. Inhibited by HDAC9. In terms of biological role, serine/threonine-protein kinase involved in various processes such as neuronal proliferation, differentiation, migration and programmed cell death. Extracellular stimuli such as pro-inflammatory cytokines or physical stress stimulate the stress-activated protein kinase/c-Jun N-terminal kinase (SAP/JNK) signaling pathway. In this cascade, two dual specificity kinases MAP2K4/MKK4 and MAP2K7/MKK7 phosphorylate and activate MAPK10/JNK3. In turn, MAPK10/JNK3 phosphorylates a number of transcription factors, primarily components of AP-1 such as JUN and ATF2 and thus regulates AP-1 transcriptional activity. Plays regulatory roles in the signaling pathways during neuronal apoptosis. Phosphorylates the neuronal microtubule regulator STMN2. Acts in the regulation of the amyloid-beta precursor protein/APP signaling during neuronal differentiation by phosphorylating APP. Also participates in neurite growth in spiral ganglion neurons. Phosphorylates the CLOCK-BMAL1 heterodimer and plays a role in the photic regulation of the circadian clock. Phosphorylates JUND and this phosphorylation is inhibited in the presence of MEN1. The sequence is that of Mitogen-activated protein kinase 10 (Mapk10) from Rattus norvegicus (Rat).